The sequence spans 413 residues: MSEKKHSCEEKSLQLYPLSNKIRHVNPNISALPSETDISESLTNDLTKLEISNYAPFNRDLETFSDLIFGLTNIQKKSLYSLQLGRSRGYALYSDENEKYLWSINTKITSTEQREVLLVKSNNKKFDTSIVLKHTHLSSKSQNEKKARVKVFRQEIWALKTLSHPCVVQLLNYYVSSAELILVENYCMGGDLYHYTKKHHSDFSLEFVGRIFSELVHTVAYLHSKCLIHRDLKLENILLTQPYNVIKTIDNWKNYPNALIQISDFELSIFVDSKNHLVQSSCGSQEYAPPEVYMGIAHDGFRADAWSLGIVLFALLEGRLPFDSYPTLDPENVRIKRYVQRLVRCDYTWHLCKSPFKRSTGNTNDNDDPSWRFRLFVKKLLKNRDQRSTPTELLKDFNKHGNFTLPLLENVTI.

Positions 102-403 (WSINTKITST…LKDFNKHGNF (302 aa)) constitute a Protein kinase domain. ATP contacts are provided by residues 108-116 (ITSTEQREV) and Lys133. The Proton acceptor role is filled by Asp231.

It belongs to the protein kinase superfamily. Ser/Thr protein kinase family.

The protein localises to the cytoplasm. The enzyme catalyses L-seryl-[protein] + ATP = O-phospho-L-seryl-[protein] + ADP + H(+). It carries out the reaction L-threonyl-[protein] + ATP = O-phospho-L-threonyl-[protein] + ADP + H(+). This is Serine/threonine-protein kinase ppk27 (ppk27) from Schizosaccharomyces pombe (strain 972 / ATCC 24843) (Fission yeast).